The chain runs to 202 residues: Small ribosomal subunit protein uS5 (202 aa).

The segment covering 1-13 (MPGQQRRGGGSGG) has biased composition (gly residues). The segment at 1–31 (MPGQQRRGGGSGGSDRRERRDRSGGGPAQEK) is disordered. Residues 14 to 23 (SDRRERRDRS) show a composition bias toward basic and acidic residues. The S5 DRBM domain occupies 34-97 (YVERVVAINR…EEAKKHFFKV (64 aa)).

This sequence belongs to the universal ribosomal protein uS5 family. In terms of assembly, part of the 30S ribosomal subunit. Contacts proteins S4 and S8.

With S4 and S12 plays an important role in translational accuracy. Functionally, located at the back of the 30S subunit body where it stabilizes the conformation of the head with respect to the body. The polypeptide is Small ribosomal subunit protein uS5 (Frankia alni (strain DSM 45986 / CECT 9034 / ACN14a)).